Reading from the N-terminus, the 270-residue chain is Aquaporin-11 (270 aa).

Helical transmembrane passes span 5–25 (IMTMYPLLISILHILFIISIC) and 59–79 (FELGVITQIYGFSAYALGLFF). The short motif at 94–96 (DPS) is the NPA 1 element. Residues 120-140 (IMGAAVSYRFAKIFWSFGLMA) form a helical membrane-spanning segment. An N-linked (GlcNAc...) asparagine glycan is attached at Asn-148. 2 helical membrane passes run 153 to 173 (ASLQVPVLIGLGFETFETIVN) and 184 to 204 (MLISAISDVCITFFGLFVSGG). The NPA 2 signature appears at 207–209 (NPT). Residues 220-240 (GLSGPSFFLVYWFGPILGSSI) traverse the membrane as a helical segment.

Belongs to the MIP/aquaporin (TC 1.A.8) family.

The protein resides in the membrane. It catalyses the reaction H2O(in) = H2O(out). Functionally, probable intracellular unorthodox aquaporin that may modulate the water content and osmolytes during anhydrobiosis. The sequence is that of Aquaporin-11 from Milnesium tardigradum (Water bear).